The primary structure comprises 225 residues: Single-pass membrane and coiled-coil domain-containing protein 3 (225 aa).

The stretch at 69-92 (IIQAMTKIQKELQKIDEALKDQLE) forms a coiled coil. A helical transmembrane segment spans residues 155-175 (IGTSLLGSIGVAVLSLGIDMI). Positions 182–209 (AVERTQLQAAIKSYEKHLEEFKAASAKY) form a coiled coil.

It is found in the membrane. This chain is Single-pass membrane and coiled-coil domain-containing protein 3 (Smco3), found in Mus musculus (Mouse).